The primary structure comprises 145 residues: Acidic phospholipase A2 (145 aa).

The signal sequence occupies residues 1 to 21; the sequence is MYPAHLLVLLAVCVSLLGAAS. A propeptide spanning residues 22 to 27 is cleaved from the precursor; sequence IPPLPL. 7 cysteine pairs are disulfide-bonded: C38–C98, C54–C144, C56–C72, C71–C125, C78–C118, C87–C111, and C105–C116. Residues Y55 and G57 each contribute to the Ca(2+) site. H75 is a catalytic residue. D76 is a Ca(2+) binding site. Residue D119 is part of the active site.

It belongs to the phospholipase A2 family. Group I subfamily. D49 sub-subfamily. Requires Ca(2+) as cofactor. In terms of tissue distribution, expressed by the venom gland.

The protein localises to the secreted. It carries out the reaction a 1,2-diacyl-sn-glycero-3-phosphocholine + H2O = a 1-acyl-sn-glycero-3-phosphocholine + a fatty acid + H(+). Functionally, PLA2 catalyzes the calcium-dependent hydrolysis of the 2-acyl groups in 3-sn-phosphoglycerides. This is Acidic phospholipase A2 from Notechis scutatus scutatus (Mainland tiger snake).